The primary structure comprises 135 residues: Ribosome-binding factor A (135 aa).

It belongs to the RbfA family. In terms of assembly, monomer. Binds 30S ribosomal subunits, but not 50S ribosomal subunits or 70S ribosomes.

The protein localises to the cytoplasm. One of several proteins that assist in the late maturation steps of the functional core of the 30S ribosomal subunit. Associates with free 30S ribosomal subunits (but not with 30S subunits that are part of 70S ribosomes or polysomes). Required for efficient processing of 16S rRNA. May interact with the 5'-terminal helix region of 16S rRNA. This chain is Ribosome-binding factor A, found in Aliivibrio fischeri (strain ATCC 700601 / ES114) (Vibrio fischeri).